We begin with the raw amino-acid sequence, 86 residues long: MSKQPVSNVRAIQANINIPMGAFRPGAGQPPRKKECTPETEEAVLPTSDEEKKPIPGAKKLPGPAVNLSEIQNIKSELKYVPRAEQ.

Positions 20 to 64 (MGAFRPGAGQPPRKKECTPETEEAVLPTSDEEKKPIPGAKKLPGP) are disordered.

It belongs to the SMPX family. As to expression, high level of expression found in the heart and skeletal muscle, a very low expression in the lung and spleen and no expression found in the liver, kidney, fat and brain.

Its function is as follows. Plays a role in the regulatory network through which muscle cells coordinate their structural and functional states during growth, adaptation, and repair. This is Small muscular protein (SMPX) from Sus scrofa (Pig).